The following is a 616-amino-acid chain: Proline--tRNA ligase (616 aa).

Belongs to the class-II aminoacyl-tRNA synthetase family. ProS type 1 subfamily. In terms of assembly, homodimer.

It localises to the cytoplasm. The catalysed reaction is tRNA(Pro) + L-proline + ATP = L-prolyl-tRNA(Pro) + AMP + diphosphate. Functionally, catalyzes the attachment of proline to tRNA(Pro) in a two-step reaction: proline is first activated by ATP to form Pro-AMP and then transferred to the acceptor end of tRNA(Pro). As ProRS can inadvertently accommodate and process non-cognate amino acids such as alanine and cysteine, to avoid such errors it has two additional distinct editing activities against alanine. One activity is designated as 'pretransfer' editing and involves the tRNA(Pro)-independent hydrolysis of activated Ala-AMP. The other activity is designated 'posttransfer' editing and involves deacylation of mischarged Ala-tRNA(Pro). The misacylated Cys-tRNA(Pro) is not edited by ProRS. The sequence is that of Proline--tRNA ligase from Streptococcus gordonii (strain Challis / ATCC 35105 / BCRC 15272 / CH1 / DL1 / V288).